A 235-amino-acid polypeptide reads, in one-letter code: Ubiquitin-like-conjugating enzyme ATG10 (235 aa).

Residue Cys196 is the Glycyl thioester intermediate of the active site.

It belongs to the ATG10 family. As to quaternary structure, forms homooligomers. Interacts with ATG7 and ATG12.

The protein localises to the preautophagosomal structure membrane. Its function is as follows. E2-like enzyme required for the cytoplasm to vacuole transport (Cvt), autophagy and nucleophagy. Acts as an E2-like enzyme that catalyzes the conjugation of ATG12 to ATG5. ATG12 conjugation to ATG5 is required for proper localization of ATG8 to the preautophagosomal structure (PAS). Likely serves as an ATG5-recognition molecule. Autophagy is required for proper vegetative growth, asexual/sexual reproduction, and full virulence. Autophagy is particularly involved in the biosynthesis of deoxynivalenol (DON), an important virulence determinant. The sequence is that of Ubiquitin-like-conjugating enzyme ATG10 from Gibberella zeae (strain ATCC MYA-4620 / CBS 123657 / FGSC 9075 / NRRL 31084 / PH-1) (Wheat head blight fungus).